We begin with the raw amino-acid sequence, 550 residues long: Mitochondrial distribution and morphology protein 12 (550 aa).

An SMP-LTD domain is found at 1–550 (MSIELNWETL…VYPSFWTFLV (550 aa)). 3 disordered regions span residues 62-168 (ITDP…PQDL), 218-356 (PPQW…TKYR), and 474-493 (TLASPAGAAPGSDEKAGGNT). The segment covering 69 to 90 (FYEEDPDVDYDDEDEDVEETHD) has biased composition (acidic residues). Residues 125–140 (VASSSSSSVGRGSAPR) are compositionally biased toward low complexity. Composition is skewed to polar residues over residues 148–157 (PTKSNININT), 251–269 (PSHSRTSSTVSNADLQTAS), 278–289 (TPTSFLRSGQQT), and 296–323 (VSTLAPTSVGTSRPPTRDLTTTMSTAQE).

It belongs to the MDM12 family. Component of the ER-mitochondria encounter structure (ERMES) or MDM complex, composed of MMM1, MDM10, MDM12 and MDM34. An MMM1 homodimer associates with one molecule of MDM12 on each side in a pairwise head-to-tail manner, and the SMP-LTD domains of MMM1 and MDM12 generate a continuous hydrophobic tunnel for phospholipid trafficking.

Its subcellular location is the mitochondrion outer membrane. The protein localises to the endoplasmic reticulum membrane. In terms of biological role, component of the ERMES/MDM complex, which serves as a molecular tether to connect the endoplasmic reticulum (ER) and mitochondria. Components of this complex are involved in the control of mitochondrial shape and protein biogenesis, and function in nonvesicular lipid trafficking between the ER and mitochondria. MDM12 is required for the interaction of the ER-resident membrane protein MMM1 and the outer mitochondrial membrane-resident beta-barrel protein MDM10. The MDM12-MMM1 subcomplex functions in the major beta-barrel assembly pathway that is responsible for biogenesis of all mitochondrial outer membrane beta-barrel proteins, and acts in a late step after the SAM complex. The MDM10-MDM12-MMM1 subcomplex further acts in the TOM40-specific pathway after the action of the MDM12-MMM1 complex. Essential for establishing and maintaining the structure of mitochondria and maintenance of mtDNA nucleoids. This Pyricularia oryzae (strain 70-15 / ATCC MYA-4617 / FGSC 8958) (Rice blast fungus) protein is Mitochondrial distribution and morphology protein 12.